We begin with the raw amino-acid sequence, 245 residues long: Cysteine-rich secretory protein 3 (245 aa).

The signal sequence occupies residues 1 to 20 (MTLFPVLLFLVAGLLPSFPA). Residues 43–171 (VNKHNELRRA…VLKYYYVCQY (129 aa)) enclose the SCP domain. Disulfide bonds link Cys-191-Cys-198, Cys-194-Cys-203, Cys-207-Cys-240, Cys-216-Cys-234, and Cys-225-Cys-238. In terms of domain architecture, ShKT spans 207–240 (CKYEDLYSNCKSLKLTLTCKHQLVRDSCKASCNC). Asn-239 carries an N-linked (GlcNAc...) asparagine glycan.

The protein belongs to the CRISP family. Interacts with A1BG. In terms of tissue distribution, salivary gland, pancreas and prostate &gt; epididymis, ovary, thymus and colon.

The protein localises to the secreted. In Homo sapiens (Human), this protein is Cysteine-rich secretory protein 3 (CRISP3).